A 744-amino-acid polypeptide reads, in one-letter code: Catalase A (744 aa).

Catalysis depends on residues His-93 and Asn-166. Position 380 (Tyr-380) interacts with heme.

The protein belongs to the catalase family. It depends on heme as a cofactor.

It localises to the peroxisome matrix. It carries out the reaction 2 H2O2 = O2 + 2 H2O. Catalyzes the degradation of hydrogen peroxide (H(2)O(2)) generated by peroxisomal oxidases to water and oxygen, thereby protecting cells from the toxic effects of hydrogen peroxide. The polypeptide is Catalase A (catA) (Emericella nidulans (strain FGSC A4 / ATCC 38163 / CBS 112.46 / NRRL 194 / M139) (Aspergillus nidulans)).